The sequence spans 420 residues: Serine--tRNA ligase (420 aa).

Position 225 to 227 (225 to 227 (TLE)) interacts with L-serine. 256–258 (RQE) contributes to the ATP binding site. Position 279 (E279) interacts with L-serine. 343-346 (EVSS) contributes to the ATP binding site. T379 provides a ligand contact to L-serine.

It belongs to the class-II aminoacyl-tRNA synthetase family. Type-1 seryl-tRNA synthetase subfamily. In terms of assembly, homodimer. The tRNA molecule binds across the dimer.

The protein localises to the cytoplasm. It carries out the reaction tRNA(Ser) + L-serine + ATP = L-seryl-tRNA(Ser) + AMP + diphosphate + H(+). The enzyme catalyses tRNA(Sec) + L-serine + ATP = L-seryl-tRNA(Sec) + AMP + diphosphate + H(+). Its pathway is aminoacyl-tRNA biosynthesis; selenocysteinyl-tRNA(Sec) biosynthesis; L-seryl-tRNA(Sec) from L-serine and tRNA(Sec): step 1/1. Catalyzes the attachment of serine to tRNA(Ser). Is also able to aminoacylate tRNA(Sec) with serine, to form the misacylated tRNA L-seryl-tRNA(Sec), which will be further converted into selenocysteinyl-tRNA(Sec). The sequence is that of Serine--tRNA ligase from Mycoplasma pneumoniae (strain ATCC 29342 / M129 / Subtype 1) (Mycoplasmoides pneumoniae).